We begin with the raw amino-acid sequence, 28 residues long: Potassium channel toxin alpha-KTx 9.7 (28 aa).

3 disulfides stabilise this stretch: Cys-3–Cys-19, Cys-6–Cys-24, and Cys-10–Cys-26.

Expressed by the venom gland.

The protein localises to the secreted. Calcium channel activator. Rapidly and reversibly activates ryanodine receptor 1 (RYR1). The protein is Potassium channel toxin alpha-KTx 9.7 of Hottentotta judaicus (Black scorpion).